Here is a 1185-residue protein sequence, read N- to C-terminus: DNA-directed RNA polymerase subunit beta' (1185 aa).

Zn(2+) is bound by residues Cys-67, Cys-69, Cys-82, and Cys-85. Mg(2+)-binding residues include Asp-457, Asp-459, and Asp-461. Residues Cys-802, Cys-876, Cys-883, and Cys-886 each contribute to the Zn(2+) site.

It belongs to the RNA polymerase beta' chain family. As to quaternary structure, the RNAP catalytic core consists of 2 alpha, 1 beta, 1 beta' and 1 omega subunit. When a sigma factor is associated with the core the holoenzyme is formed, which can initiate transcription. Mg(2+) is required as a cofactor. The cofactor is Zn(2+).

The catalysed reaction is RNA(n) + a ribonucleoside 5'-triphosphate = RNA(n+1) + diphosphate. DNA-dependent RNA polymerase catalyzes the transcription of DNA into RNA using the four ribonucleoside triphosphates as substrates. This Clostridium novyi (strain NT) protein is DNA-directed RNA polymerase subunit beta'.